The following is a 493-amino-acid chain: Alginate production protein AlgE (493 aa).

The N-terminal stretch at 1–25 (MKLNPLMAAGMGLGFTLFWACPTLA) is a signal peptide. Over residues 93–111 (DPLEQSNSDGSGTQTSRGT) the composition is skewed to polar residues. The tract at residues 93 to 115 (DPLEQSNSDGSGTQTSRGTASER) is disordered.

This sequence belongs to the AlgE family.

It localises to the cell outer membrane. Its pathway is glycan biosynthesis; alginate biosynthesis. Has non-porin-like, channel-forming properties and probably functions as an alginate permeability pore. The chain is Alginate production protein AlgE (algE) from Pseudomonas syringae pv. tomato (strain ATCC BAA-871 / DC3000).